Reading from the N-terminus, the 602-residue chain is Zinc finger MYND domain-containing protein 11 (602 aa).

The region spanning 6 to 82 is the SAMD1-like winged helix (WH) domain; sequence KRRQADTKAI…CKGSKAGIEQ (77 aa). A PHD-type zinc finger spans residues 100–148; the sequence is DWYCFECHLPGEVLICDLCFRVYHSKCLSDEFRLRDSSSHWQCPVCRSI. The Bromo domain maps to 149-255; it reads KKKHSNKQEM…KDTCHELDEL (107 aa). Zn(2+) contacts are provided by Cys-258, Cys-261, Cys-277, and His-281. A PWWP domain is found at 280–331; that stretch reads NHELVWAKMKGFGFWPAKVMQKEDNQVDVRFFGHHHQRAWIPSENIQDITVN. Residues 291–310 form an aromatic cage required for H3.3K36me3-specific binding region; that stretch reads FGFWPAKVMQKEDNQVDVRF. Residue Lys-366 forms a Glycyl lysine isopeptide (Lys-Gly) (interchain with G-Cter in SUMO2) linkage. The segment at 366–461 is disordered; it reads KNEDRGEEEA…HRSTQTTSDG (96 aa). Positions 394–400 match the Nuclear localization signal motif; that stretch reads RAKKGRR. Residues Lys-407 and Lys-408 each participate in a glycyl lysine isopeptide (Lys-Gly) (interchain with G-Cter in SUMO2) cross-link. Ser-421 carries the phosphoserine modification. Over residues 435-461 the composition is skewed to polar residues; it reads SVSTQTKKLSASSPRMLHRSTQTTSDG. Residues Cys-563, Cys-566, Cys-574, Cys-575, Cys-581, Cys-585, His-594, and Cys-598 each contribute to the Zn(2+) site. The MYND-type zinc-finger motif lies at 563–598; the sequence is CYNCEEEAMYHCCWNTSYCSIKCQQEHWHAEHKRTC.

In terms of assembly, homooligomer; forms homooligomers via its C-terminus. Interacts with histone H3.3 trimethylated at 'Lys-36' (H3.3K36me3). Interacts (via MYND-type zinc finger) with NCOR1. Interacts (via MYND-type zinc finger) with MGA protein (via PXLXP motif). Interacts (via MYND-type zinc finger) with EZH2. Interacts with EMSY and E2F6. Interacts with PIAS1 and UBE2I. In terms of processing, ubiquitinated, leading to proteasomal degradation. Post-translationally, sumoylated following its interaction with PIAS1 and UBE2I.

It localises to the nucleus. The protein localises to the chromosome. Functionally, chromatin reader that specifically recognizes and binds histone H3.3 trimethylated at 'Lys-36' (H3.3K36me3) and regulates RNA polymerase II elongation. Does not bind other histone H3 subtypes (H3.1 or H3.2). Colocalizes with highly expressed genes and functions as a transcription corepressor by modulating RNA polymerase II at the elongation stage. Binds non-specifically to dsDNA. Acts as a tumor-suppressor by repressing a transcriptional program essential for tumor cell growth. The chain is Zinc finger MYND domain-containing protein 11 (Zmynd11) from Mus musculus (Mouse).